Reading from the N-terminus, the 645-residue chain is DEAD-box ATP-dependent RNA helicase 46 (645 aa).

Disordered regions lie at residues 1-22 and 44-137; these read MAAT…KPWK and YERP…AGNE. Positions 15 to 49 constitute a WW domain; sequence PNLPKPWKGLVDSRTGYLYFWNPETNVTQYERPAS. Positions 60-72 are enriched in low complexity; that stretch reads VSSSVQTNQQSSS. Residues 77–91 are compositionally biased toward basic and acidic residues; the sequence is GKEDDKYGRGSDGPK. Residues 108-136 show a composition bias toward low complexity; sequence SSNDAASGLGNASSGGSSARGPPSSAAGN. Positions 161–189 match the Q motif motif; sequence MSFEATGLPNELLREVYSAGFSAPSPIQA. One can recognise a Helicase ATP-binding domain in the interval 192–366; it reads WPIAMQNRDI…ADLLVNPAQV (175 aa). 205-212 serves as a coordination point for ATP; that stretch reads AKTGSGKT. The DEAD box motif lies at 314-317; the sequence is DEAD. Positions 395–539 constitute a Helicase C-terminal domain; that stretch reads RLEQILRSQE…KVPPQVREMA (145 aa). Residues 532 to 645 form a disordered region; the sequence is PPQVREMATR…FHEAMMMKNR (114 aa). Positions 556–597 are enriched in gly residues; that stretch reads SSGGGGGRGGYGDSGYGGRGESGYGSRGDSGYGGRGDSGGRG. A compositionally biased stretch (low complexity) spans 598-608; it reads SWAPSRDSSGS. Residues 612 to 623 show a composition bias toward basic and acidic residues; that stretch reads GRERSRSPERFR. The span at 624 to 634 shows a compositional bias: low complexity; that stretch reads GGPPSTSSPPR.

This sequence belongs to the DEAD box helicase family. DDX5/DBP2 subfamily.

The enzyme catalyses ATP + H2O = ADP + phosphate + H(+). In Arabidopsis thaliana (Mouse-ear cress), this protein is DEAD-box ATP-dependent RNA helicase 46 (RH46).